A 218-amino-acid chain; its full sequence is Alkylmercury lyase (218 aa).

The protein belongs to the MerB family.

It catalyses the reaction an alkylmercury + H(+) = an alkane + Hg(2+). Cleaves the carbon-mercury bond of organomercurials such as phenylmercuric acetate. One product is Hg(2+), which is subsequently detoxified by the mercuric reductase. This is Alkylmercury lyase from Clostridium butyricum.